A 450-amino-acid chain; its full sequence is Phosphoglucosamine mutase (450 aa).

Ser100 (phosphoserine intermediate) is an active-site residue. The Mg(2+) site is built by Ser100, Asp240, Asp242, and Asp244. At Ser100 the chain carries Phosphoserine.

This sequence belongs to the phosphohexose mutase family. Mg(2+) serves as cofactor. Post-translationally, activated by phosphorylation.

It catalyses the reaction alpha-D-glucosamine 1-phosphate = D-glucosamine 6-phosphate. Its function is as follows. Catalyzes the conversion of glucosamine-6-phosphate to glucosamine-1-phosphate. This chain is Phosphoglucosamine mutase, found in Desulforudis audaxviator (strain MP104C).